Reading from the N-terminus, the 315-residue chain is Olfactory receptor 5P59 (315 aa).

At 1-28 (MAFLQDGNHTAVTEFILLGLTDDPVLRV) the chain is on the extracellular side. Asn-8 is a glycosylation site (N-linked (GlcNAc...) asparagine). Residues 29–49 (VLFTIILCIYLVTVFGNLSTI) form a helical membrane-spanning segment. The Cytoplasmic segment spans residues 50-57 (LLIRVSSQ). A helical transmembrane segment spans residues 58 to 78 (LHHPMYFFLSHLASVDIGISS). Residues 79–102 (SVTPSMLVNFLLERSTISYLGCGI) are Extracellular-facing. Cys-100 and Cys-193 form a disulfide bridge. A helical transmembrane segment spans residues 103–123 (QLGSADFIASVECFLLAAMAY). At 124–136 (DRFMAVCNPLLYS) the chain is on the cytoplasmic side. A helical transmembrane segment spans residues 137-157 (TKMSTQVCVQLVVGSYIGGFL). Topologically, residues 158 to 200 (NASLIVTVYFFSFLFCGPNRIDHFFCDFAPLAELSCSDVSVSV) are extracellular. A helical membrane pass occupies residues 201-221 (LIISFSAGSVTMITVFVIVIS). Residues 222–241 (YSYILITILKMHSTEGRHKA) lie on the Cytoplasmic side of the membrane. A helical transmembrane segment spans residues 242-262 (FSTCTSHLTAVTLYYGTITFI). The Extracellular portion of the chain corresponds to 263 to 275 (YVMPKSSFSTDQN). A helical transmembrane segment spans residues 276 to 296 (KVVSVFYMVMIPMLNPLIYSL). Residues 297-315 (SNNEIKGALKRQLGMKTLS) lie on the Cytoplasmic side of the membrane.

This sequence belongs to the G-protein coupled receptor 1 family.

The protein localises to the cell membrane. Functionally, potential odorant receptor. In Mus musculus (Mouse), this protein is Olfactory receptor 5P59.